The primary structure comprises 196 residues: C-type lectin domain family 2 member F (196 aa).

The segment at 1–21 (MNAQCLKKPEEGESSPGTGDK) is disordered. The Cytoplasmic portion of the chain corresponds to 1–41 (MNAQCLKKPEEGESSPGTGDKILQRNSLRAISPESSAKLYC). The helical; Signal-anchor for type II membrane protein transmembrane segment at 42–62 (CCGVIMVLTVAVVALSVALPA) threads the bilayer. The Extracellular portion of the chain corresponds to 63-196 (TKTEQILINK…SRSSNYMLQC (134 aa)). An intrachain disulfide couples cysteine 77 to cysteine 88. Residues 84–187 (VGNKCFYFSE…DYIPRKWICS (104 aa)) enclose the C-type lectin domain. A glycan (N-linked (GlcNAc...) asparagine) is linked at asparagine 97. Cysteine 105 and cysteine 186 are oxidised to a cystine.

The protein localises to the cell membrane. Its function is as follows. Lectin-type cell surface receptor. In Mus musculus (Mouse), this protein is C-type lectin domain family 2 member F (Clec2f).